Consider the following 69-residue polypeptide: Antimicrobial peptide Meucin-18 (69 aa).

Positions 1–16 (MVIFLAYFLVVNESEA) are cleaved as a signal peptide. The propeptide occupies 38–69 (ERSVMNRDLENLFDPYQRNLEMDRLLKQLRNY).

The protein belongs to the non-disulfide-bridged peptide (NDBP) superfamily. Medium-length antimicrobial peptide (group 3) family. In terms of tissue distribution, expressed by the venom gland.

The protein localises to the secreted. It localises to the target cell membrane. Amphipathic peptide that exhibits extensive cytolytic activities against both prokaryotic and eukaryotic cells. Acts by fastly disrupting the bacterial membrane. Is more potent against Gram-positive bacteria than against Gram-negative bacteria, and fungi (LC=25.1-8.3 uM). Shows potent activity against penicillin (MIC=3.0 uM) and methicillin (MIC=1.5-3.0 uM) resistant bacteria. Is lethal to the fungus Beauveria sp (LC=1.9 uM), a highly lethal pathogenic fungus to insects and resistant to many AMPs. Shows hemolytic activity against rabbit erythrocytes (37.7% of inhibition at 6.25 uM) and cytolysis against rat dorsal root ganglions. May act by disrupting the integrity of the bacterial cell membrane. Antibiotic activity is not affected by major negatively charged components of the prokaryotic cell wall (e.g. lipopolysaccharides and lipoteichoic acid). In vivo, intravenous injection into mice tail provokes uncomfortable symptoms with a death rate of 12.5%. In vivo, in a mouse model of lethal peritonitis, shows potent antibiotic activity without cytotoxicity, improving the survival rate. This is Antimicrobial peptide Meucin-18 from Mesobuthus eupeus (Lesser Asian scorpion).